The sequence spans 187 residues: Adenine phosphoribosyltransferase (187 aa).

133 to 137 (ATGGS) contacts AMP.

This sequence belongs to the purine/pyrimidine phosphoribosyltransferase family. In terms of assembly, homodimer. Mg(2+) is required as a cofactor.

The protein resides in the cytoplasm. It is found in the nucleus. It catalyses the reaction AMP + diphosphate = 5-phospho-alpha-D-ribose 1-diphosphate + adenine. It participates in purine metabolism; AMP biosynthesis via salvage pathway; AMP from adenine: step 1/1. Functionally, catalyzes a salvage reaction resulting in the formation of AMP, that is energically less costly than de novo synthesis. The chain is Adenine phosphoribosyltransferase (APT1) from Eremothecium gossypii (strain ATCC 10895 / CBS 109.51 / FGSC 9923 / NRRL Y-1056) (Yeast).